The following is a 270-amino-acid chain: Probable septum site-determining protein MinC (270 aa).

A disordered region spans residues 105–129 (DRRAPSSKAADEAPVQQAEPAAPAA). Positions 116–129 (EAPVQQAEPAAPAA) are enriched in low complexity.

The protein belongs to the MinC family. In terms of assembly, interacts with MinD and FtsZ.

Cell division inhibitor that blocks the formation of polar Z ring septums. Rapidly oscillates between the poles of the cell to destabilize FtsZ filaments that have formed before they mature into polar Z rings. Prevents FtsZ polymerization. The protein is Probable septum site-determining protein MinC of Burkholderia mallei (strain NCTC 10247).